A 195-amino-acid chain; its full sequence is dCTP deaminase (195 aa).

Residues R110–R115, D128, V136–E138, Y171, K178, and Q182 each bind dCTP. E138 functions as the Proton donor/acceptor in the catalytic mechanism. A compositionally biased stretch (basic and acidic residues) spans R169 to Y179. Positions R169–E195 are disordered.

Belongs to the dCTP deaminase family. Homotrimer.

It catalyses the reaction dCTP + H2O + H(+) = dUTP + NH4(+). Its pathway is pyrimidine metabolism; dUMP biosynthesis; dUMP from dCTP (dUTP route): step 1/2. Functionally, catalyzes the deamination of dCTP to dUTP. The protein is dCTP deaminase of Haemophilus influenzae (strain 86-028NP).